Reading from the N-terminus, the 717-residue chain is UvrABC system protein C (717 aa).

The GIY-YIG domain occupies 16–95; that stretch reads DAPGVYRFHD…IKEYDPRFNV (80 aa). The 36-residue stretch at 208-243 folds into the UVR domain; that stretch reads DTLIRKLDREMRQASEELEFERAARLRDDLEALRRA. Disordered stretches follow at residues 517–555 and 696–717; these read TAAG…GRPR and HAAL…GESQ. Basic and acidic residues-rich tracts occupy residues 541–553 and 707–717; these read EAER…ETGR and ESRDNAEGESQ.

Belongs to the UvrC family. In terms of assembly, interacts with UvrB in an incision complex.

Its subcellular location is the cytoplasm. Its function is as follows. The UvrABC repair system catalyzes the recognition and processing of DNA lesions. UvrC both incises the 5' and 3' sides of the lesion. The N-terminal half is responsible for the 3' incision and the C-terminal half is responsible for the 5' incision. The protein is UvrABC system protein C of Saccharopolyspora erythraea (strain ATCC 11635 / DSM 40517 / JCM 4748 / NBRC 13426 / NCIMB 8594 / NRRL 2338).